A 410-amino-acid chain; its full sequence is Caspase-1 (410 aa).

The CARD domain occupies 1-91 (MADKVLKGKR…HLAETLGLSS (91 aa)). Positions 1–119 (MADKVLKGKR…PLPASVNNMP (119 aa)) are excised as a propeptide. Polar residues predominate over residues 88 to 104 (GLSSSPQSGNSQNTTDS). The tract at residues 88-125 (GLSSSPQSGNSQNTTDSEVAFPPLPASVNNMPGPAEPE) is disordered. Catalysis depends on residues histidine 235 and cysteine 284. Residues 297 to 322 (SPAAPMDSTSQMGSSLSQVGDNLEDD) constitute a propeptide that is removed on maturation.

Belongs to the peptidase C14A family. Heterotetramer that consists of two anti-parallel arranged heterodimers, each one formed by a 20 kDa (Caspase-1 subunit p20) and a 10 kDa (Caspase-1 subunit p10) subunit. May be a component of the inflammasome, a protein complex which also includes PYCARD, CARD8 and NLRP2 and whose function would be the activation of pro-inflammatory caspases. Component of the AIM2 PANoptosome complex, a multiprotein complex that drives inflammatory cell death (PANoptosis). Both the p10 and p20 subunits interact with MEFV. Interacts with CARD17P/INCA and CARD18. Interacts with SERPINB1; this interaction regulates CASP1 activity. In terms of assembly, heterotetramer that consists of two anti-parallel arranged heterodimers, each one formed by a 20 kDa (Caspase-1 subunit p20) and a 10 kDa (Caspase-1 subunit p10) subunit. The two subunits are derived from the precursor sequence by an autocatalytic mechanism. Post-translationally, ubiquitinated via 'Lys-11'-linked polyubiquitination. Deubiquitinated by USP8.

The protein resides in the cytoplasm. Its subcellular location is the cell membrane. The catalysed reaction is Strict requirement for an Asp residue at position P1 and has a preferred cleavage sequence of Tyr-Val-Ala-Asp-|-.. Functionally, thiol protease involved in a variety of inflammatory processes by proteolytically cleaving other proteins, such as the precursors of the inflammatory cytokines interleukin-1 beta (IL1B) and interleukin 18 (IL18) as well as the pyroptosis inducer Gasdermin-D (GSDMD), into active mature peptides. Plays a key role in cell immunity as an inflammatory response initiator: once activated through formation of an inflammasome complex, it initiates a pro-inflammatory response through the cleavage of the two inflammatory cytokines IL1B and IL18, releasing the mature cytokines which are involved in a variety of inflammatory processes. Cleaves a tetrapeptide after an Asp residue at position P1. Also initiates pyroptosis, a programmed lytic cell death pathway, through cleavage of GSDMD. In contrast to cleavage of interleukin IL1B, recognition and cleavage of GSDMD is not strictly dependent on the consensus cleavage site but depends on an exosite interface on CASP1 that recognizes and binds the Gasdermin-D, C-terminal (GSDMD-CT) part. Cleaves and activates CASP7 in response to bacterial infection, promoting plasma membrane repair. Upon inflammasome activation, during DNA virus infection but not RNA virus challenge, controls antiviral immunity through the cleavage of CGAS, rendering it inactive. In apoptotic cells, cleaves SPHK2 which is released from cells and remains enzymatically active extracellularly. This Felis catus (Cat) protein is Caspase-1 (CASP1).